We begin with the raw amino-acid sequence, 122 residues long: Ribosome-binding factor A (122 aa).

The protein belongs to the RbfA family. Monomer. Binds 30S ribosomal subunits, but not 50S ribosomal subunits or 70S ribosomes.

The protein localises to the cytoplasm. One of several proteins that assist in the late maturation steps of the functional core of the 30S ribosomal subunit. Associates with free 30S ribosomal subunits (but not with 30S subunits that are part of 70S ribosomes or polysomes). Required for efficient processing of 16S rRNA. May interact with the 5'-terminal helix region of 16S rRNA. The sequence is that of Ribosome-binding factor A from Moorella thermoacetica (strain ATCC 39073 / JCM 9320).